We begin with the raw amino-acid sequence, 479 residues long: Something about silencing protein 10 (479 aa).

Residues 1-10 (MVGRSRRRGA) show a composition bias toward basic residues. 2 disordered regions span residues 1-45 (MVGR…SYYQ) and 62-166 (KGWN…EEAQ). Arg-8 carries the omega-N-methylarginine modification. Residues 11–21 (AKWAAVRAKAG) show a composition bias toward low complexity. Ser-37 is subject to Phosphoserine. Over residues 69-111 (SGDEEDGEEEEEEVLALDMDDEDDEDGGNAGEEEEEENADDDG) the composition is skewed to acidic residues. Lys-144 carries the N6-acetyllysine; alternate modification. Lys-144 is covalently cross-linked (Glycyl lysine isopeptide (Lys-Gly) (interchain with G-Cter in SUMO2); alternate). Ser-150 carries the phosphoserine modification. The span at 153 to 165 (EAEEEEREEEEEA) shows a compositional bias: acidic residues. Residue Thr-362 is modified to Phosphothreonine. A phosphoserine mark is found at Ser-365 and Ser-368. Arg-385 carries the post-translational modification Citrulline. The interval 419–466 (RGLTPRRKKIDRNPRVKHREKFRRAKIRRRGQVREVRKEEQRYSGELS) is disordered. The span at 422–449 (TPRRKKIDRNPRVKHREKFRRAKIRRRG) shows a compositional bias: basic residues. A compositionally biased stretch (basic and acidic residues) spans 450-461 (QVREVRKEEQRY).

The protein belongs to the SAS10 family. Part of the small subunit (SSU) processome, composed of more than 70 proteins and the RNA chaperone small nucleolar RNA (snoRNA) U3. In terms of processing, citrullinated by PADI4.

Its subcellular location is the nucleus. The protein resides in the nucleolus. In terms of biological role, essential for gene silencing: has a role in the structure of silenced chromatin. Plays a role in the developing brain. Part of the small subunit (SSU) processome, first precursor of the small eukaryotic ribosomal subunit. During the assembly of the SSU processome in the nucleolus, many ribosome biogenesis factors, an RNA chaperone and ribosomal proteins associate with the nascent pre-rRNA and work in concert to generate RNA folding, modifications, rearrangements and cleavage as well as targeted degradation of pre-ribosomal RNA by the RNA exosome. This Homo sapiens (Human) protein is Something about silencing protein 10.